Consider the following 861-residue polypeptide: Actin-binding LIM protein 1 (861 aa).

LIM zinc-binding domains lie at 97–156 (IHCH…MYGT), 156–216 (TRCH…MSSS), 224–283 (SNCA…LFGV), and 283–343 (VKCE…TKTE). Ser-216 carries the phosphoserine modification. The tract at residues 374–414 (LQLLSPPCLTNSNKNPRQPTRTSSESIYSRPGSSIPGSPGH) is disordered. Over residues 381-400 (CLTNSNKNPRQPTRTSSESI) the composition is skewed to polar residues. The segment covering 404 to 413 (PGSSIPGSPG) has biased composition (low complexity). A Phosphoserine modification is found at Ser-411. 2 positions are modified to phosphotyrosine: Tyr-417 and Tyr-440. 2 disordered regions span residues 459–590 (EDKQ…PTYA) and 634–682 (FPAA…ELLR). Phosphoserine occurs at positions 466, 470, and 475. Residues 467–478 (LGESPRTLSPTP) are compositionally biased toward polar residues. Thr-477 is subject to Phosphothreonine. The residue at position 479 (Ser-479) is a Phosphoserine. The residue at position 483 (Tyr-483) is a Phosphotyrosine. The segment covering 493–518 (RSTSQGSINSPVYSRHSYTPTTSRSP) has biased composition (polar residues). A phosphoserine mark is found at Ser-496, Ser-499, and Ser-502. A compositionally biased stretch (low complexity) spans 536–546 (PLRTSSFSSTH). A phosphoserine mark is found at Ser-582 and Ser-671. Positions 673-723 (REEDEEELLRRRQLQEEQLMKLNSGLGQLILKEEMEKESRERASLASRYDS) form a coiled coil. Residue Lys-704 forms a Glycyl lysine isopeptide (Lys-Gly) (interchain with G-Cter in SUMO2) linkage. Residues 713-748 (ERASLASRYDSPLHSASHAPSSKTSSLPGYGKNGLH) form a disordered region. Phosphoserine is present on residues Ser-723, Ser-738, Ser-760, and Ser-789. Residues 724–738 (PLHSASHAPSSKTSS) show a composition bias toward low complexity. Residues 793–861 (MLEPKIFPYE…NDMKKKAKLF (69 aa)) form the HP domain.

Binds F-actin. Interacts with ABRA. Isoform 1 is detected in adult retina, where it is highly expressed in the ganglion layer. Detected in rod inner segment. Isoform 2 is highly expressed in adult retina, brain, kidney and heart. Isoform 3 is highly expressed in adult retina, brain, kidney, liver, skeletal muscle, spleen and heart. Detected in embryonic retina, brain, spinal cord, peripheral sensory ganglia and thymus.

The protein resides in the cytoplasm. The protein localises to the cytoskeleton. Its function is as follows. May act as scaffold protein. May play a role in the development of the retina. Has been suggested to play a role in axon guidance. The polypeptide is Actin-binding LIM protein 1 (Ablim1) (Mus musculus (Mouse)).